The chain runs to 234 residues: UPF0502 protein BPSS1373 (234 aa).

This sequence belongs to the UPF0502 family.

The protein is UPF0502 protein BPSS1373 of Burkholderia pseudomallei (strain K96243).